The chain runs to 83 residues: MNIVPILLIRFYQSFISPLLGPSCKYHPTCSNYAIEAFRQHNFFYASWLTVWRVLRCNPFSKGGYDPVPPKSVKSAGNSKDSK.

The tract at residues 62 to 83 is disordered; that stretch reads KGGYDPVPPKSVKSAGNSKDSK.

The protein belongs to the UPF0161 family.

It is found in the cell inner membrane. Functionally, could be involved in insertion of integral membrane proteins into the membrane. In Chlorobaculum tepidum (strain ATCC 49652 / DSM 12025 / NBRC 103806 / TLS) (Chlorobium tepidum), this protein is Putative membrane protein insertion efficiency factor.